Here is a 532-residue protein sequence, read N- to C-terminus: Glucose-6-phosphate isomerase (532 aa).

Residue Glu-330 is the Proton donor of the active site. Catalysis depends on residues His-359 and Lys-460.

Belongs to the GPI family.

The protein resides in the cytoplasm. It catalyses the reaction alpha-D-glucose 6-phosphate = beta-D-fructose 6-phosphate. It functions in the pathway carbohydrate biosynthesis; gluconeogenesis. It participates in carbohydrate degradation; glycolysis; D-glyceraldehyde 3-phosphate and glycerone phosphate from D-glucose: step 2/4. Functionally, catalyzes the reversible isomerization of glucose-6-phosphate to fructose-6-phosphate. The polypeptide is Glucose-6-phosphate isomerase (Prochlorococcus marinus (strain MIT 9211)).